The chain runs to 31 residues: Putative translational regulatory protein ArgL (31 aa).

Its function is as follows. May serve a regulatory role in expression of downstream gene argF; in an argL-argF-lacZ fusion mutation of the start codon to a stop codon in argL increases expression of beta-galactosidase. The chain is Putative translational regulatory protein ArgL from Escherichia coli (strain K12).